Reading from the N-terminus, the 479-residue chain is Aspartyl/glutamyl-tRNA(Asn/Gln) amidotransferase subunit B (479 aa).

It belongs to the GatB/GatE family. GatB subfamily. Heterotrimer of A, B and C subunits.

It catalyses the reaction L-glutamyl-tRNA(Gln) + L-glutamine + ATP + H2O = L-glutaminyl-tRNA(Gln) + L-glutamate + ADP + phosphate + H(+). The enzyme catalyses L-aspartyl-tRNA(Asn) + L-glutamine + ATP + H2O = L-asparaginyl-tRNA(Asn) + L-glutamate + ADP + phosphate + 2 H(+). Functionally, allows the formation of correctly charged Asn-tRNA(Asn) or Gln-tRNA(Gln) through the transamidation of misacylated Asp-tRNA(Asn) or Glu-tRNA(Gln) in organisms which lack either or both of asparaginyl-tRNA or glutaminyl-tRNA synthetases. The reaction takes place in the presence of glutamine and ATP through an activated phospho-Asp-tRNA(Asn) or phospho-Glu-tRNA(Gln). The chain is Aspartyl/glutamyl-tRNA(Asn/Gln) amidotransferase subunit B from Geotalea uraniireducens (strain Rf4) (Geobacter uraniireducens).